The chain runs to 726 residues: Quinolinate synthase, chloroplastic (726 aa).

The N-terminal 67 residues, 1-67 (MDAANLVMKS…KKPSNNSTFT (67 aa)), are a transit peptide targeting the chloroplast. The Cysteine persulfide intermediate role is filled by C133. Iminosuccinate contacts are provided by H283 and S309. C363 is a [4Fe-4S] cluster binding site. Residues 392–394 (YIN) and S414 contribute to the iminosuccinate site. C487 is a [4Fe-4S] cluster binding site. Iminosuccinate-binding positions include 513–515 (HFE) and T538. Residue C643 participates in [4Fe-4S] cluster binding.

This sequence belongs to the quinolinate synthase family. Type 1 subfamily. In terms of assembly, homodimer. [4Fe-4S] cluster serves as cofactor.

The protein localises to the plastid. It is found in the chloroplast. The enzyme catalyses iminosuccinate + dihydroxyacetone phosphate = quinolinate + phosphate + 2 H2O + H(+). It functions in the pathway alkaloid biosynthesis; nicotine biosynthesis. Its pathway is cofactor biosynthesis; NAD(+) biosynthesis; quinolinate from iminoaspartate: step 1/1. Its function is as follows. Involved in the biosynthesis of pyridine alkaloid natural products, leading mainly to the production of anabasine, anatabine, nicotine and nornicotine, effective deterrents against herbivores with antiparasitic and pesticide properties (neurotoxins); nornicotine serves as the precursor in the synthesis of the carcinogen compound N'-nitrosonornicotine (NNN). Catalyzes the condensation of iminoaspartate with dihydroxyacetone phosphate to form quinolinate. The polypeptide is Quinolinate synthase, chloroplastic (Nicotiana tabacum (Common tobacco)).